The primary structure comprises 327 residues: Thiosulfate dehydrogenase (327 aa).

A signal peptide spans 1–26 (MKIIPYRKRSVLIATIFAISAVGITG). Positions 66 to 78 (NDMTATAGGTDTA) are enriched in low complexity. Positions 66–93 (NDMTATAGGTDTASGKPTIKMPDESTIP) are disordered. 2 Cytochrome c domains span residues 99–196 (AAVR…SWLS) and 219–305 (PNTD…THLP). The heme c site is built by Cys125, Cys128, His129, Cys232, Cys235, and His236.

In terms of assembly, monomer. In terms of processing, binds 2 heme c groups covalently per subunit.

It is found in the periplasm. It carries out the reaction 2 thiosulfate + 2 Fe(III)-[cytochrome c] = tetrathionate + 2 Fe(II)-[cytochrome c] + 2 H(+). Catalyzes the oxidation of 2 molecules of thiosulfate to tetrathionate. This is Thiosulfate dehydrogenase (tsdA) from Psychrobacter arcticus (strain DSM 17307 / VKM B-2377 / 273-4).